A 393-amino-acid chain; its full sequence is Protein TsgA (393 aa).

12 consecutive transmembrane segments (helical) span residues 11-31 (WISF…GMVM), 51-71 (FLNA…EIVP), 78-98 (FGFL…SLAL), 101-121 (TAMF…TFLI), 134-154 (LLFT…IAAF), 162-182 (WYWV…LTFG), 206-226 (IGVL…LGFI), 245-265 (TLVS…SFIL), 273-293 (ILTV…TGTP), 297-317 (AWSI…IITL), 332-352 (FVLT…GPIV), and 361-381 (LLTA…LGFV).

This sequence belongs to the major facilitator superfamily. TsgA family.

Its subcellular location is the cell inner membrane. The protein is Protein TsgA of Shigella boydii serotype 4 (strain Sb227).